Reading from the N-terminus, the 632-residue chain is tRNA-guanine(15) transglycosylase (632 aa).

Asp-86 functions as the Nucleophile in the catalytic mechanism. The substrate site is built by Asp-121 and Gly-186. The PUA domain occupies 553 to 628; sequence AMRVTVSKES…IAVKVHEGRD (76 aa).

Belongs to the archaeosine tRNA-ribosyltransferase family. The cofactor is Zn(2+).

It carries out the reaction guanosine(15) in tRNA + 7-cyano-7-deazaguanine = 7-cyano-7-carbaguanosine(15) in tRNA + guanine. It functions in the pathway tRNA modification; archaeosine-tRNA biosynthesis. Exchanges the guanine residue with 7-cyano-7-deazaguanine (preQ0) at position 15 in the dihydrouridine loop (D-loop) of archaeal tRNAs. The chain is tRNA-guanine(15) transglycosylase from Thermoplasma acidophilum (strain ATCC 25905 / DSM 1728 / JCM 9062 / NBRC 15155 / AMRC-C165).